Reading from the N-terminus, the 783-residue chain is Rabenosyn-5 (783 aa).

N-acetylalanine is present on Ala2. Ser3 carries the phosphoserine modification. The segment at 14-37 (FLCPLCLKDLQSFYQLQSHYEEEH) adopts a C2H2-type zinc-finger fold. Positions 99-262 (RSHLSDFKKH…HCKDKLLKRE (164 aa)) are necessary for the correct targeting to endosomes. Residues 156–259 (DQDVPFCPDC…CCTHCKDKLL (104 aa)) form an FYVE-type zinc finger. Cys162, Cys165, Cys178, Cys181, Cys186, and Cys189 together coordinate Zn(2+). The span at 206–223 (KDSLSTHTSPSQSPNSVH) shows a compositional bias: polar residues. The segment at 206-240 (KDSLSTHTSPSQSPNSVHGSRRGSISSMSSVSSVL) is disordered. Residues Ser214, Ser218, Ser225, and Ser229 each carry the phosphoserine modification. Low complexity predominate over residues 227–239 (RGSISSMSSVSSV). Residues Cys251 and Cys254 each contribute to the Zn(2+) site. The necessary for interaction with RAB4A stretch occupies residues 263–499 (QQMDEKEHTP…QLQDEYDQQQ (237 aa)). The segment at 263 to 783 (QQMDEKEHTP…TLAKQKGAPN (521 aa)) is necessary for interaction with EHD1. Coiled coils occupy residues 377–412 (TKEQ…KLEE) and 471–531 (QAKA…ELER). Basic and acidic residues-rich tracts occupy residues 387 to 399 (KRKQ…RTVE) and 405 to 414 (ESRRKLEERQ). The interval 387-433 (KRKQDLEQKRTVERQAALESRRKLEERQSGLASHTANGDVRSLRGIP) is disordered. The region spanning 495-514 (YDQQQTEKAIELSRKQAEEE) is the UIM domain. Disordered regions lie at residues 569–638 (SYSL…SPTE) and 663–733 (FEED…EEHI). 2 stretches are compositionally biased toward polar residues: residues 571–584 (SLDQ…SSTA) and 610–623 (TLPQ…SDKA). A necessary for interaction with RAB5A region spans residues 627 to 783 (PFDEDDLSSP…TLAKQKGAPN (157 aa)). Positions 663–673 (FEEDAEEEEVA) are enriched in acidic residues. Ser686 bears the Phosphoserine mark. Positions 721-733 (VDSDSGMEAEEHI) are enriched in acidic residues.

As to quaternary structure, interacts with EHD1, RAB4A, RAB5A, RAB22A, RAB24 and VPS45. Binds simultaneously to RAB4A and RAB5A in vitro. Interacts with RAB4A and RAB5A that has been activated by GTP binding.

The protein localises to the cell membrane. It localises to the early endosome membrane. Functionally, rab4/Rab5 effector protein acting in early endocytic membrane fusion and membrane trafficking of recycling endosomes. Required for endosome fusion either homotypically or with clathrin coated vesicles. Plays a role in the lysosomal trafficking of CTSD/cathepsin D from the Golgi to lysosomes. Also promotes the recycling of transferrin directly from early endosomes to the plasma membrane. Binds phospholipid vesicles containing phosphatidylinositol 3-phosphate (PtdInsP3). Plays a role in the recycling of transferrin receptor to the plasma membrane. The chain is Rabenosyn-5 from Mus musculus (Mouse).